We begin with the raw amino-acid sequence, 490 residues long: Aspartyl/glutamyl-tRNA(Asn/Gln) amidotransferase subunit B (490 aa).

The protein belongs to the GatB/GatE family. GatB subfamily. In terms of assembly, heterotrimer of A, B and C subunits.

It catalyses the reaction L-glutamyl-tRNA(Gln) + L-glutamine + ATP + H2O = L-glutaminyl-tRNA(Gln) + L-glutamate + ADP + phosphate + H(+). The enzyme catalyses L-aspartyl-tRNA(Asn) + L-glutamine + ATP + H2O = L-asparaginyl-tRNA(Asn) + L-glutamate + ADP + phosphate + 2 H(+). In terms of biological role, allows the formation of correctly charged Asn-tRNA(Asn) or Gln-tRNA(Gln) through the transamidation of misacylated Asp-tRNA(Asn) or Glu-tRNA(Gln) in organisms which lack either or both of asparaginyl-tRNA or glutaminyl-tRNA synthetases. The reaction takes place in the presence of glutamine and ATP through an activated phospho-Asp-tRNA(Asn) or phospho-Glu-tRNA(Gln). The sequence is that of Aspartyl/glutamyl-tRNA(Asn/Gln) amidotransferase subunit B from Burkholderia thailandensis (strain ATCC 700388 / DSM 13276 / CCUG 48851 / CIP 106301 / E264).